Reading from the N-terminus, the 254-residue chain is Acetylglutamate kinase (254 aa).

Substrate contacts are provided by residues 40–41, R62, and N154; that span reads GG. Residues 177–182 and 205–207 contribute to the ATP site; these read DVSGIL and IIT.

It belongs to the acetylglutamate kinase family. ArgB subfamily. In terms of assembly, homodimer.

It localises to the cytoplasm. The enzyme catalyses N-acetyl-L-glutamate + ATP = N-acetyl-L-glutamyl 5-phosphate + ADP. It participates in amino-acid biosynthesis; L-arginine biosynthesis; N(2)-acetyl-L-ornithine from L-glutamate: step 2/4. Functionally, catalyzes the ATP-dependent phosphorylation of N-acetyl-L-glutamate. This is Acetylglutamate kinase from Yersinia enterocolitica serotype O:8 / biotype 1B (strain NCTC 13174 / 8081).